The following is a 73-amino-acid chain: DNA-directed RNA polymerase subunit omega (73 aa).

The protein belongs to the RNA polymerase subunit omega family. The RNAP catalytic core consists of 2 alpha, 1 beta, 1 beta' and 1 omega subunit. When a sigma factor is associated with the core the holoenzyme is formed, which can initiate transcription.

It catalyses the reaction RNA(n) + a ribonucleoside 5'-triphosphate = RNA(n+1) + diphosphate. Promotes RNA polymerase assembly. Latches the N- and C-terminal regions of the beta' subunit thereby facilitating its interaction with the beta and alpha subunits. The sequence is that of DNA-directed RNA polymerase subunit omega from Lactobacillus delbrueckii subsp. bulgaricus (strain ATCC BAA-365 / Lb-18).